The chain runs to 963 residues: SH3 domain-binding protein 4 (963 aa).

The region spanning 55 to 114 (GNAKEVIAIKDYCPTNFTTLKFSKGDHLYVLDTSGGEWWYAHNTTEMGYIPSSYVQPLNY) is the SH3 1 domain. Serine 131, serine 246, serine 251, serine 279, and serine 296 each carry phosphoserine. In terms of domain architecture, ZU5 spans 317-454 (TNIVCKLDSS…LEPCMYVAVV (138 aa)). Serine 637 is subject to Phosphoserine. Positions 654 to 724 (SSLKFGKLLK…HTKNVLVVGR (71 aa)) constitute an SH3 2 domain.

As to quaternary structure, homodimer or homooligomer. Interacts with DNM2, EPS15, clathrin, the adapter protein complex 2/AP-2 and TFRC. Interacts with the Rag GTPases RRAGA, RRAGB, RRAGC and RRAGD; the interaction is most probably direct, preferentially occurs with their inactive GDP-bound form and is negatively regulated by amino acids. In terms of assembly, (Microbial infection) Interacts with molluscum contagiosum virus protein MC159L; this interaction is important for the suppression of autophagy. Phosphorylated upon EGF stimulation. Phosphorylation prevents interaction with DNM2. As to expression, expressed in all tissues tested with higher expression in pancreas. Expressed by retinal pigment epithelial cells (at protein level).

It is found in the membrane. It localises to the clathrin-coated pit. The protein resides in the cytoplasmic vesicle. Its subcellular location is the clathrin-coated vesicle. The protein localises to the nucleus. In terms of biological role, may function in transferrin receptor internalization at the plasma membrane through a cargo-specific control of clathrin-mediated endocytosis. Alternatively, may act as a negative regulator of the amino acid-induced TOR signaling by inhibiting the formation of active Rag GTPase complexes. Preferentially binds inactive Rag GTPase complexes and prevents their interaction with the mTORC1 complex inhibiting its relocalization to lysosomes and its activation. Thereby, may indirectly regulate cell growth, proliferation and autophagy. This chain is SH3 domain-binding protein 4 (SH3BP4), found in Homo sapiens (Human).